Consider the following 418-residue polypeptide: Tektin-1 (418 aa).

Coiled coils occupy residues 21-84 (KNQY…LEQL), 268-308 (LKET…DQEG), and 336-383 (RLIK…ENTI). The tract at residues 399-418 (PRDGDDHGEWAGGSHPEAVC) is disordered.

Belongs to the tektin family. Microtubule inner protein component of sperm flagellar doublet microtubules. Ubiquitinated, leading to its degradation. Deubiquitinated by USP16, promoting its stability. As to expression, expressed in trachea multiciliated cells.

Its subcellular location is the cytoplasm. The protein localises to the cytoskeleton. It is found in the cilium axoneme. The protein resides in the flagellum axoneme. Its function is as follows. Microtubule inner protein (MIP) part of the dynein-decorated doublet microtubules (DMTs) in cilia and flagellar axoneme. Forms filamentous polymers in the walls of ciliary and flagellar microtubules. The protein is Tektin-1 (TEKT1) of Bos taurus (Bovine).